Reading from the N-terminus, the 100-residue chain is Integration host factor subunit alpha (100 aa).

Belongs to the bacterial histone-like protein family. In terms of assembly, heterodimer of an alpha and a beta chain.

Functionally, this protein is one of the two subunits of integration host factor, a specific DNA-binding protein that functions in genetic recombination as well as in transcriptional and translational control. This is Integration host factor subunit alpha from Ruegeria pomeroyi (strain ATCC 700808 / DSM 15171 / DSS-3) (Silicibacter pomeroyi).